The following is a 283-amino-acid chain: NAD kinase (283 aa).

Aspartate 68 serves as the catalytic Proton acceptor. NAD(+)-binding positions include 68-69, 142-143, arginine 153, aspartate 172, 183-188, and glutamine 242; these read DG, ND, and TAYSLS.

The protein belongs to the NAD kinase family. It depends on a divalent metal cation as a cofactor.

The protein localises to the cytoplasm. The catalysed reaction is NAD(+) + ATP = ADP + NADP(+) + H(+). In terms of biological role, involved in the regulation of the intracellular balance of NAD and NADP, and is a key enzyme in the biosynthesis of NADP. Catalyzes specifically the phosphorylation on 2'-hydroxyl of the adenosine moiety of NAD to yield NADP. The sequence is that of NAD kinase from Thermoanaerobacter pseudethanolicus (strain ATCC 33223 / 39E) (Clostridium thermohydrosulfuricum).